We begin with the raw amino-acid sequence, 328 residues long: Fructokinase-2 (328 aa).

This sequence belongs to the carbohydrate kinase PfkB family.

The catalysed reaction is D-fructose + ATP = D-fructose 6-phosphate + ADP + H(+). It functions in the pathway glycan biosynthesis; starch biosynthesis. Its function is as follows. May play an important role in maintaining the flux of carbon towards starch formation. This chain is Fructokinase-2 (FRK2), found in Solanum lycopersicum (Tomato).